We begin with the raw amino-acid sequence, 349 residues long: Dihydroorotase (349 aa).

Histidine 17 and histidine 19 together coordinate Zn(2+). Residues 19-21 (HLR) and asparagine 45 contribute to the substrate site. 3 residues coordinate Zn(2+): lysine 103, histidine 140, and histidine 178. Position 103 is an N6-carboxylysine (lysine 103). Histidine 140 contacts substrate. Leucine 224 contacts substrate. Aspartate 252 is a binding site for Zn(2+). The active site involves aspartate 252. Substrate is bound by residues histidine 256 and alanine 268.

It belongs to the metallo-dependent hydrolases superfamily. DHOase family. Class II DHOase subfamily. As to quaternary structure, homodimer. Zn(2+) serves as cofactor.

It catalyses the reaction (S)-dihydroorotate + H2O = N-carbamoyl-L-aspartate + H(+). It participates in pyrimidine metabolism; UMP biosynthesis via de novo pathway; (S)-dihydroorotate from bicarbonate: step 3/3. In terms of biological role, catalyzes the reversible cyclization of carbamoyl aspartate to dihydroorotate. In Buchnera aphidicola subsp. Schizaphis graminum (strain Sg), this protein is Dihydroorotase.